Here is a 728-residue protein sequence, read N- to C-terminus: NF-kappa-B inhibitor zeta (728 aa).

The interval 45-107 (GAGDTGYLSA…PHMGVGRQQR (63 aa)) is disordered. Positions 53–82 (SAVPSAPGSPGSDSSDFSSTSSVSSCGAVE) are enriched in low complexity. Residues 83–96 (SRPRGGARAERPQV) show a composition bias toward basic and acidic residues. One can recognise an OCA domain in the interval 107–129 (RGPFQGVRVKNSVKELLLHIRSN). The Nuclear localization signal signature appears at 163-178 (KRKGPDPLSDGPVCKR). 2 stretches are compositionally biased toward polar residues: residues 241–250 (PTVPQNSPRD) and 268–288 (QPFQ…YQYS). The segment at 241 to 334 (PTVPQNSPRD…SQSPKYDSNL (94 aa)) is disordered. Low complexity predominate over residues 303 to 315 (QQQHQQNYPHNSP). The span at 316 to 330 (LQFSPYSRMSQSPKY) shows a compositional bias: polar residues. The interval 329 to 403 (KYDSNLFDTH…VGVHDVGSHS (75 aa)) is required for transcriptional activity. Residues 414–728 (MGSPMNTTQL…KSIQQRAPPY (315 aa)) are interaction with NFKB1/p50. ANK repeat units follow at residues 453-482 (DGDT…ALHM), 489-518 (NGQS…QVNT), 522-551 (WGRT…RSNQ), 561-589 (DGLT…SHSP), 591-617 (VQDL…AVEA), 622-651 (SGRT…CLSF), and 658-691 (NGNT…DPST).

In terms of assembly, interacts with NFKB1/p50. Interacts with RELA. Interacts with AKIRIN2. In terms of tissue distribution, expressed in kidney, liver, lung and heart. Expressed at very low levels in skeletal muscle, spleen and brain.

It localises to the nucleus. Its function is as follows. Involved in regulation of NF-kappa-B transcription factor complexes. Inhibits NF-kappa-B activity without affecting its nuclear translocation upon stimulation. Inhibits DNA-binding of RELA and NFKB1/p50, and of the NF-kappa-B p65-p50 heterodimer and the NF-kappa-B p50-p50 homodimer. Also seems to activate NF-kappa-B-mediated transcription. In vitro, upon association with NFKB1/p50 has transcriptional activation activity and, together with NFKB1/p50 and RELA, is recruited to LCN2 promoters. Promotes transcription of LCN2 and DEFB4. Is recruited to IL-6 promoters and activates IL-6 but decreases TNF-alpha production in response to LPS. Seems to be involved in the induction of inflammatory genes activated through TLR/IL-1 receptor signaling. Involved in the induction of T helper 17 cells (Th17) differentiation upon recognition of antigen by T cell antigen receptor (TCR). This Mus musculus (Mouse) protein is NF-kappa-B inhibitor zeta (Nfkbiz).